The chain runs to 120 residues: Large ribosomal subunit protein uL18 (120 aa).

The protein belongs to the universal ribosomal protein uL18 family. In terms of assembly, part of the 50S ribosomal subunit; part of the 5S rRNA/L5/L18/L25 subcomplex. Contacts the 5S and 23S rRNAs.

In terms of biological role, this is one of the proteins that bind and probably mediate the attachment of the 5S RNA into the large ribosomal subunit, where it forms part of the central protuberance. The chain is Large ribosomal subunit protein uL18 from Geobacillus thermodenitrificans (strain NG80-2).